The chain runs to 560 residues: Kinesin light chain 1 (560 aa).

Residues 31–99 (VIQGLEALKN…MALSNHLNAV (69 aa)) are a coiled coil. Residues 155-176 (KKYDDDISPSEDKDTDSTKEPL) show a composition bias toward basic and acidic residues. A disordered region spans residues 155 to 203 (KKYDDDISPSEDKDTDSTKEPLDDLFPNDEDDPGQGIQQQHSSAAAAAQ). Position 162 is a phosphoserine (Ser-162). Residues 192–203 (QQQHSSAAAAAQ) show a composition bias toward low complexity. TPR repeat units lie at residues 213–246 (LRTLHNLVIQYASQGRYEVAVPLCKQALEDLEKT), 255–288 (ATMLNILALVYRDQNKYKDAANLLNDALAIREKT), 297–330 (AATLNNLAVLYGKRGKYKEAEPLCKRALEIREKV), 339–372 (AKQLNNLALLCQNQGKYEEVEYYYQRALEIYQTK), and 381–414 (AKTKNNLASCYLKQGKFKQAETLYKEILTRAHER). At Tyr-449 the chain carries Phosphotyrosine. Residue Ser-460 is modified to Phosphoserine. Residues 464–497 (TTTLKNLGALYRRQGKFEAAETLEEAAMRSRKQG) form a TPR 6 repeat. A phosphoserine; by AMPK mark is found at Ser-521 and Ser-524.

Belongs to the kinesin light chain family. As to quaternary structure, oligomeric complex composed of two heavy chains and two light chains. Interacts with SPAG9. Interacts with ATCAY; may link mitochondria to KLC1 and regulate mitochondria localization into neuron projections. Interacts (via TPR repeats) with TOR1A; the interaction associates TOR1A with the kinesin oligomeric complex. Interacts with BORCS5. Interacts with MAPK8IP3/JIP3 and NTRK2/TRKB; interaction with NTRK2/TRKB is mediated by MAPK8IP3/JIP3. Interacts with CLSTN1; phosphorylation at Ser-460 inhibits interaction with CLSTN1. Phosphorylation at Ser-460 by ERK inhibits interaction with CLSTN1 and localization to cytoplasmic vesicles.

The protein resides in the cell projection. Its subcellular location is the growth cone. It localises to the cytoplasmic vesicle. It is found in the cytoplasm. The protein localises to the cytoskeleton. Functionally, kinesin is a microtubule-associated force-producing protein that may play a role in organelle transport. The light chain may function in coupling of cargo to the heavy chain or in the modulation of its ATPase activity. In Pongo abelii (Sumatran orangutan), this protein is Kinesin light chain 1 (KLC1).